Reading from the N-terminus, the 217-residue chain is Holliday junction branch migration complex subunit RuvA (217 aa).

The domain I stretch occupies residues 1-64; that stretch reads MIGKLTGILD…EDAIRLFGFE (64 aa). The domain II stretch occupies residues 65-145; sequence TKVEQDWFCL…NAPHQSMPHF (81 aa). A flexible linker region spans residues 146 to 160; sequence VSYSSETSSQAGTQH. Residues 161 to 217 form a domain III region; that stretch reads TGHQHSMDALAALTKLGFERDQATHALQEAIKAFEGETPSSALLIRHSLKLLSSHLK.

It belongs to the RuvA family. In terms of assembly, homotetramer. Forms an RuvA(8)-RuvB(12)-Holliday junction (HJ) complex. HJ DNA is sandwiched between 2 RuvA tetramers; dsDNA enters through RuvA and exits via RuvB. An RuvB hexamer assembles on each DNA strand where it exits the tetramer. Each RuvB hexamer is contacted by two RuvA subunits (via domain III) on 2 adjacent RuvB subunits; this complex drives branch migration. In the full resolvosome a probable DNA-RuvA(4)-RuvB(12)-RuvC(2) complex forms which resolves the HJ.

It is found in the cytoplasm. The RuvA-RuvB-RuvC complex processes Holliday junction (HJ) DNA during genetic recombination and DNA repair, while the RuvA-RuvB complex plays an important role in the rescue of blocked DNA replication forks via replication fork reversal (RFR). RuvA specifically binds to HJ cruciform DNA, conferring on it an open structure. The RuvB hexamer acts as an ATP-dependent pump, pulling dsDNA into and through the RuvAB complex. HJ branch migration allows RuvC to scan DNA until it finds its consensus sequence, where it cleaves and resolves the cruciform DNA. The protein is Holliday junction branch migration complex subunit RuvA of Bartonella bacilliformis (strain ATCC 35685 / KC583 / Herrer 020/F12,63).